Consider the following 237-residue polypeptide: Ribosomal RNA small subunit methyltransferase G (237 aa).

Residues Gly78, Phe83, 129–130 (AE), and Arg148 each bind S-adenosyl-L-methionine.

The protein belongs to the methyltransferase superfamily. RNA methyltransferase RsmG family.

It localises to the cytoplasm. Specifically methylates the N7 position of a guanine in 16S rRNA. This Streptococcus pyogenes serotype M18 (strain MGAS8232) protein is Ribosomal RNA small subunit methyltransferase G.